A 68-amino-acid polypeptide reads, in one-letter code: Protein ShdD (68 aa).

Functionally, involved in the non-oxidative decarboxylation and detoxification of phenolic derivatives under anaerobic conditions, however the precise biochemical function of ShdD in metabolism of phenolic acid is unknown. The sequence is that of Protein ShdD from Sedimentibacter hydroxybenzoicus (Clostridium hydroxybenzoicum).